Reading from the N-terminus, the 218-residue chain is Protein N-lysine methyltransferase METTL21A (218 aa).

S-adenosyl-L-methionine-binding positions include Trp-47, 73–75 (GAG), Asp-94, Trp-125, and Ala-143.

It belongs to the methyltransferase superfamily. METTL21 family. As to quaternary structure, interacts with heat shock 70 family members; at least some of these proteins are methylation substrates.

The protein localises to the cytoplasm. The catalysed reaction is L-lysyl-[protein] + 3 S-adenosyl-L-methionine = N(6),N(6),N(6)-trimethyl-L-lysyl-[protein] + 3 S-adenosyl-L-homocysteine + 3 H(+). Functionally, protein-lysine methyltransferase that selectively trimethylates residues in heat shock protein 70 (HSP70) family members. Contributes to the in vivo trimethylation of Lys residues in HSPA1 and HSPA8. In vitro methylates 'Lys-561' in HSPA1, 'Lys-564' in HSPA2, 'Lys-585' in HSPA5, 'Lys-563' in HSPA6 and 'Lys-561' in HSPA8. The protein is Protein N-lysine methyltransferase METTL21A (METTL21A) of Bos taurus (Bovine).